A 143-amino-acid polypeptide reads, in one-letter code: Peptide methionine sulfoxide reductase MsrB (143 aa).

One can recognise a MsrB domain in the interval Asp-16–Lys-139. Cys-55, Cys-58, Cys-104, and Cys-107 together coordinate Zn(2+). Cys-128 (nucleophile) is an active-site residue.

This sequence belongs to the MsrB Met sulfoxide reductase family. Zn(2+) serves as cofactor.

The catalysed reaction is L-methionyl-[protein] + [thioredoxin]-disulfide + H2O = L-methionyl-(R)-S-oxide-[protein] + [thioredoxin]-dithiol. This is Peptide methionine sulfoxide reductase MsrB from Burkholderia thailandensis (strain ATCC 700388 / DSM 13276 / CCUG 48851 / CIP 106301 / E264).